Reading from the N-terminus, the 412-residue chain is Na(+)-translocating NADH-quinone reductase subunit B (412 aa).

3 helical membrane-spanning segments follow: residues 57–77 (MILV…NVGL), 127–147 (VFFL…EVLF), and 163–183 (SILF…ALGI). Residue Thr-236 is modified to FMN phosphoryl threonine. The next 5 membrane-spanning stretches (helical) occupy residues 270-290 (GSIG…ILFG), 297-317 (IVAG…VIGS), 322-342 (MFAM…GMMF), 358-378 (WSYG…NPAY), and 381-401 (GMML…YLVV).

The protein belongs to the NqrB/RnfD family. Composed of six subunits; NqrA, NqrB, NqrC, NqrD, NqrE and NqrF. It depends on FMN as a cofactor.

It is found in the cell inner membrane. It catalyses the reaction a ubiquinone + n Na(+)(in) + NADH + H(+) = a ubiquinol + n Na(+)(out) + NAD(+). NQR complex catalyzes the reduction of ubiquinone-1 to ubiquinol by two successive reactions, coupled with the transport of Na(+) ions from the cytoplasm to the periplasm. NqrA to NqrE are probably involved in the second step, the conversion of ubisemiquinone to ubiquinol. The protein is Na(+)-translocating NADH-quinone reductase subunit B of Klebsiella pneumoniae subsp. pneumoniae (strain ATCC 700721 / MGH 78578).